The primary structure comprises 214 residues: Ras-related protein Rab-17 (214 aa).

The residue at position 29 (serine 29) is a Phosphoserine. Residues glycine 31, lysine 32, threonine 33, and threonine 50 each coordinate GTP. Mg(2+)-binding residues include threonine 33, threonine 50, and aspartate 73. A Switch 1 motif is present at residues 43 to 54; sequence DFSNVLPTVGCA. The short motif at 75-91 is the Switch 2 element; it reads AGQEKYQSVCHLYFRGA. The GTP site is built by glycine 76, asparagine 132, lysine 133, aspartate 135, and alanine 163. A disordered region spans residues 183–204; the sequence is RAGDTGSSRPQEGEAVALNQEP. S-geranylgeranyl cysteine attachment occurs at residues cysteine 211 and cysteine 212.

This sequence belongs to the small GTPase superfamily. Rab family. Mg(2+) serves as cofactor. In terms of tissue distribution, expressed in kidney, liver, and intestine mainly by epithelial cells. Expressed in hippocampus (at protein level).

The protein resides in the recycling endosome membrane. It is found in the melanosome. The protein localises to the cell projection. Its subcellular location is the dendrite. It carries out the reaction GTP + H2O = GDP + phosphate + H(+). Regulated by guanine nucleotide exchange factors (GEFs) which promote the exchange of bound GDP for free GTP. Regulated by GTPase activating proteins (GAPs) which increase the GTP hydrolysis activity. Inhibited by GDP dissociation inhibitors (GDIs). Its function is as follows. The small GTPases Rab are key regulators of intracellular membrane trafficking, from the formation of transport vesicles to their fusion with membranes. Rabs cycle between an inactive GDP-bound form and an active GTP-bound form that is able to recruit to membranes different set of downstream effectors directly responsible for vesicle formation, movement, tethering and fusion. RAB17 is involved in transcytosis, the directed movement of endocytosed material through the cell and its exocytosis from the plasma membrane at the opposite side. Mainly observed in epithelial cells, transcytosis mediates, for instance, the transcellular transport of immunoglobulins from the basolateral surface to the apical surface. Most probably controls membrane trafficking through apical recycling endosomes in a post-endocytic step of transcytosis. Required for melanosome transport and release from melanocytes, it also regulates dendrite and dendritic spine development. May also play a role in cell migration. This chain is Ras-related protein Rab-17, found in Mus musculus (Mouse).